A 152-amino-acid polypeptide reads, in one-letter code: Xanthine-guanine phosphoribosyltransferase (152 aa).

5-phospho-alpha-D-ribose 1-diphosphate-binding positions include 37–38 (RG), R69, and 88–96 (DDLVDTGGT). Residue R69 coordinates GMP. D89 lines the Mg(2+) pocket. Positions 92 and 135 each coordinate guanine. 2 residues coordinate xanthine: D92 and I135. GMP contacts are provided by residues 92 to 96 (DTGGT) and 134 to 135 (WI).

The protein belongs to the purine/pyrimidine phosphoribosyltransferase family. XGPT subfamily. As to quaternary structure, homotetramer. It depends on Mg(2+) as a cofactor.

Its subcellular location is the cell inner membrane. It catalyses the reaction GMP + diphosphate = guanine + 5-phospho-alpha-D-ribose 1-diphosphate. The enzyme catalyses XMP + diphosphate = xanthine + 5-phospho-alpha-D-ribose 1-diphosphate. It carries out the reaction IMP + diphosphate = hypoxanthine + 5-phospho-alpha-D-ribose 1-diphosphate. The protein operates within purine metabolism; GMP biosynthesis via salvage pathway; GMP from guanine: step 1/1. It participates in purine metabolism; XMP biosynthesis via salvage pathway; XMP from xanthine: step 1/1. Purine salvage pathway enzyme that catalyzes the transfer of the ribosyl-5-phosphate group from 5-phospho-alpha-D-ribose 1-diphosphate (PRPP) to the N9 position of the 6-oxopurines guanine and xanthine to form the corresponding ribonucleotides GMP (guanosine 5'-monophosphate) and XMP (xanthosine 5'-monophosphate), with the release of PPi. To a lesser extent, also acts on hypoxanthine. This Escherichia fergusonii (strain ATCC 35469 / DSM 13698 / CCUG 18766 / IAM 14443 / JCM 21226 / LMG 7866 / NBRC 102419 / NCTC 12128 / CDC 0568-73) protein is Xanthine-guanine phosphoribosyltransferase.